Consider the following 114-residue polypeptide: Cytochrome c2 (114 aa).

Q1 is subject to Pyrrolidone carboxylic acid. Heme c is bound by residues C13, C16, H17, and M93.

Belongs to the cytochrome c family. Post-translationally, binds 1 heme c group covalently per subunit.

Its subcellular location is the periplasm. Functionally, cytochrome c2 is found mainly in purple, non-sulfur, photosynthetic bacteria where it functions as the electron donor to the oxidized bacteriochlorophyll in the photophosphorylation pathway. However, it may also have a role in the respiratory chain and is found in some non-photosynthetic bacteria. This Rhodopseudomonas palustris protein is Cytochrome c2.